A 137-amino-acid chain; its full sequence is uncharacterized protein (137 aa).

A run of 5 helical transmembrane segments spans residues 4–26 (AIIL…KIVC), 35–57 (IVVN…NIII), 62–84 (ILTY…YYAL), 89–111 (ASIV…ILFL), and 116–135 (TLPQ…LLSI). The 123-residue stretch at 13 to 135 (VFYGVGTFFA…IIIGIILLSI (123 aa)) folds into the EamA domain.

It localises to the cell membrane. This is an uncharacterized protein from Methanocaldococcus jannaschii (strain ATCC 43067 / DSM 2661 / JAL-1 / JCM 10045 / NBRC 100440) (Methanococcus jannaschii).